A 501-amino-acid polypeptide reads, in one-letter code: Cytochrome P450 2S1 (501 aa).

Cys-441 provides a ligand contact to heme.

The protein belongs to the cytochrome P450 family. Heme serves as cofactor.

The protein resides in the endoplasmic reticulum membrane. The protein localises to the microsome membrane. The catalysed reaction is all-trans-retinoate + reduced [NADPH--hemoprotein reductase] + O2 = all-trans-5,6-epoxyretinoate + oxidized [NADPH--hemoprotein reductase] + H2O + H(+). The enzyme catalyses all-trans-retinoate + reduced [NADPH--hemoprotein reductase] + O2 = all-trans-4-hydroxyretinoate + oxidized [NADPH--hemoprotein reductase] + H2O + H(+). It catalyses the reaction (5S)-hydroperoxy-(6E,8Z,11Z,14Z)-eicosatetraenoate = 5-oxo-(6E,8Z,11Z,14Z)-eicosatetraenoate + H2O. It carries out the reaction (12S)-hydroperoxy-(5Z,8Z,10E,14Z)-eicosatetraenoate = 12-oxo-(5Z,8Z,10E,14Z)-eicosatetraenoate + H2O. The catalysed reaction is (15S)-hydroperoxy-(5Z,8Z,11Z,13E)-eicosatetraenoate = 15-oxo-(5Z,8Z,11Z,13E)-eicosatetraenoate + H2O. The enzyme catalyses prostaglandin H2 = thromboxane A2. It catalyses the reaction prostaglandin H2 = (12S)-hydroxy-(5Z,8E,10E)-heptadecatrienoate + malonaldehyde. It carries out the reaction (13S)-hydroperoxy-(9Z,11E)-octadecadienoate = 13-oxo-(9Z,11E)-octadecadienoate + H2O. It functions in the pathway lipid metabolism; fatty acid metabolism. In terms of biological role, a cytochrome P450 monooxygenase involved in the metabolism of retinoids and eicosanoids. In epidermis, may contribute to the oxidative metabolism of all-trans-retinoic acid. For this activity, uses molecular oxygen inserting one oxygen atom into a substrate, and reducing the second into a water molecule, with two electrons provided by NADPH via cytochrome P450 reductase (NADPH--hemoprotein reductase). Additionally, displays peroxidase and isomerase activities toward various oxygenated eicosanoids such as prostaglandin H2 (PGH2) and hydroperoxyeicosatetraenoates (HPETEs). Independently of cytochrome P450 reductase, NADPH, and O2, catalyzes the breakdown of PGH2 to hydroxyheptadecatrienoic acid (HHT) and malondialdehyde (MDA), which is known to act as a mediator of DNA damage. This chain is Cytochrome P450 2S1 (Cyp2s1), found in Mus musculus (Mouse).